A 161-amino-acid chain; its full sequence is Nucleotide-binding protein mma_0840 (161 aa).

This sequence belongs to the YajQ family.

In terms of biological role, nucleotide-binding protein. This is Nucleotide-binding protein mma_0840 from Janthinobacterium sp. (strain Marseille) (Minibacterium massiliensis).